Here is an 806-residue protein sequence, read N- to C-terminus: Glycerol-3-phosphate acyltransferase (806 aa).

The HXXXXD motif signature appears at 305–310 (CHRSHM).

The protein belongs to the GPAT/DAPAT family.

The protein localises to the cell inner membrane. It carries out the reaction sn-glycerol 3-phosphate + an acyl-CoA = a 1-acyl-sn-glycero-3-phosphate + CoA. It participates in phospholipid metabolism; CDP-diacylglycerol biosynthesis; CDP-diacylglycerol from sn-glycerol 3-phosphate: step 1/3. This chain is Glycerol-3-phosphate acyltransferase, found in Salmonella paratyphi B (strain ATCC BAA-1250 / SPB7).